A 245-amino-acid polypeptide reads, in one-letter code: Probable 2-phosphosulfolactate phosphatase (245 aa).

The protein belongs to the ComB family. Mg(2+) serves as cofactor.

It carries out the reaction (2R)-O-phospho-3-sulfolactate + H2O = (2R)-3-sulfolactate + phosphate. The chain is Probable 2-phosphosulfolactate phosphatase from Nostoc sp. (strain PCC 7120 / SAG 25.82 / UTEX 2576).